The sequence spans 685 residues: Allergen Cr-PI (685 aa).

Residues 1–16 form the signal peptide; that stretch reads MKTALVFAAVVAFVAA. Asn-233 carries N-linked (GlcNAc...) asparagine glycosylation.

This sequence belongs to the hemocyanin family.

It is found in the secreted. The protein localises to the extracellular space. Functionally, larval storage protein (LSP) which may serve as a store of amino acids for synthesis of adult proteins. This chain is Allergen Cr-PI, found in Periplaneta americana (American cockroach).